A 1520-amino-acid polypeptide reads, in one-letter code: Accessory colonization factor AcfD (1520 aa).

A signal peptide spans 1-16 (MKIRIVSLIVLGFLIG). C17 is lipidated: N-palmitoyl cysteine. C17 is lipidated: S-diacylglycerol cysteine. In terms of domain architecture, Peptidase M60 spans 1085–1388 (GNRQPTGQWA…MFAQLKEWAE (304 aa)).

The protein localises to the cell membrane. The sequence is that of Accessory colonization factor AcfD (acfD) from Vibrio cholerae serotype O1 (strain ATCC 39315 / El Tor Inaba N16961).